Consider the following 407-residue polypeptide: Argininosuccinate synthase (407 aa).

ATP contacts are provided by residues 16 to 24 and alanine 44; that span reads AYSGGLDTS. The L-citrulline site is built by tyrosine 96 and serine 101. Glycine 126 provides a ligand contact to ATP. Residues threonine 128, asparagine 132, and aspartate 133 each coordinate L-aspartate. Asparagine 132 contributes to the L-citrulline binding site. Residues arginine 136, serine 185, serine 194, glutamate 270, and tyrosine 282 each contribute to the L-citrulline site.

It belongs to the argininosuccinate synthase family. Type 1 subfamily. As to quaternary structure, homotetramer.

It is found in the cytoplasm. The enzyme catalyses L-citrulline + L-aspartate + ATP = 2-(N(omega)-L-arginino)succinate + AMP + diphosphate + H(+). The protein operates within amino-acid biosynthesis; L-arginine biosynthesis; L-arginine from L-ornithine and carbamoyl phosphate: step 2/3. In Shewanella sp. (strain W3-18-1), this protein is Argininosuccinate synthase.